The chain runs to 213 residues: Octanoyltransferase (213 aa).

The 176-residue stretch at 36 to 211 (TNTPDEIWLV…KFCQQLGFKL (176 aa)) folds into the BPL/LPL catalytic domain. Substrate contacts are provided by residues 75–82 (RGGQVTYH), 142–144 (SLG), and 155–157 (GLA). The active-site Acyl-thioester intermediate is Cys-173.

The protein belongs to the LipB family.

It is found in the cytoplasm. The enzyme catalyses octanoyl-[ACP] + L-lysyl-[protein] = N(6)-octanoyl-L-lysyl-[protein] + holo-[ACP] + H(+). The protein operates within protein modification; protein lipoylation via endogenous pathway; protein N(6)-(lipoyl)lysine from octanoyl-[acyl-carrier-protein]: step 1/2. In terms of biological role, catalyzes the transfer of endogenously produced octanoic acid from octanoyl-acyl-carrier-protein onto the lipoyl domains of lipoate-dependent enzymes. Lipoyl-ACP can also act as a substrate although octanoyl-ACP is likely to be the physiological substrate. This Photorhabdus laumondii subsp. laumondii (strain DSM 15139 / CIP 105565 / TT01) (Photorhabdus luminescens subsp. laumondii) protein is Octanoyltransferase.